A 628-amino-acid polypeptide reads, in one-letter code: Kinesin-like protein subito (628 aa).

Residues 28–68 form a disordered region; that stretch reads RFRPRPNKKMRLFDNIQESEEESFSEYSDTESEYKYQSSEA. A compositionally biased stretch (acidic residues) spans 44–58; the sequence is QESEEESFSEYSDTE. Residues 87 to 479 enclose the Kinesin motor domain; the sequence is GPQVFLRLRP…LNFASIAKNI (393 aa). Residue 169 to 176 coordinates ATP; the sequence is GTSGSGKT. Positions 509–612 form a coiled coil; sequence DYTKELEDEN…KNPASDTDIS (104 aa). The disordered stretch occupies residues 596–628; it reads KDEIEELKNPASDTDISDDPNESKSPIEILDDD. At S607 the chain carries Phosphoserine. Phosphothreonine is present on T609. Phosphoserine is present on S612.

This sequence belongs to the TRAFAC class myosin-kinesin ATPase superfamily. Kinesin family.

It localises to the cytoplasm. It is found in the cytoskeleton. Its function is as follows. Required during female meiosis for bipolar spindle formation in the absence of the centrosomes and chromosome homolog segregation. Also has roles in male meiosis and mitotic divisions of the early embryo. The sequence is that of Kinesin-like protein subito (sub) from Drosophila melanogaster (Fruit fly).